We begin with the raw amino-acid sequence, 445 residues long: Probable D-serine dehydratase (445 aa).

Residue Lys119 is modified to N6-(pyridoxal phosphate)lysine.

It belongs to the serine/threonine dehydratase family. DsdA subfamily. It depends on pyridoxal 5'-phosphate as a cofactor.

The catalysed reaction is D-serine = pyruvate + NH4(+). This Pseudomonas putida (strain GB-1) protein is Probable D-serine dehydratase.